The following is a 293-amino-acid chain: 4-hydroxy-tetrahydrodipicolinate synthase (293 aa).

A pyruvate-binding site is contributed by T44. Y132 serves as the catalytic Proton donor/acceptor. K160 serves as the catalytic Schiff-base intermediate with substrate. Residue I202 participates in pyruvate binding.

Belongs to the DapA family. As to quaternary structure, homotetramer; dimer of dimers.

The protein localises to the cytoplasm. It catalyses the reaction L-aspartate 4-semialdehyde + pyruvate = (2S,4S)-4-hydroxy-2,3,4,5-tetrahydrodipicolinate + H2O + H(+). The protein operates within amino-acid biosynthesis; L-lysine biosynthesis via DAP pathway; (S)-tetrahydrodipicolinate from L-aspartate: step 3/4. Functionally, catalyzes the condensation of (S)-aspartate-beta-semialdehyde [(S)-ASA] and pyruvate to 4-hydroxy-tetrahydrodipicolinate (HTPA). This is 4-hydroxy-tetrahydrodipicolinate synthase from Pelagibacter ubique (strain HTCC1062).